We begin with the raw amino-acid sequence, 167 residues long: UPF0587 protein F46B6.12 (167 aa).

Zn(2+) is bound by residues Cys-34, Cys-37, Cys-68, and Cys-71.

The protein belongs to the UPF0587 family.

The chain is UPF0587 protein F46B6.12 from Caenorhabditis elegans.